Reading from the N-terminus, the 485-residue chain is MPVPPPPPPPPPPPPPPPPPLGAPPPPPLGAPPPPPPPGPPVSTDTPSLRKPDLKGRSALLADIQQGTRLRKVTQINDRSAPQIEGSKGTSKEGGAAGSNARGGNTPPALGDLFAGGFPVLRPAGQRDVSGGKSGQGPGSRAPSPRLPIKAISGPLPAPASPRLGNASETHSSARPVPPRPSVPAPPPPTPPPPPPPPLPPASPIKAQLVSPPAPPTKVNPSVVPPPLPCAPPLPPPPPTPPPLPPASALSDKAVRPQLAPLHLPPIPPPLPLLPPCGYPGLHSEPNSPAQEVREPPAPPPPPPPPPPPPLPTYASCSSRTAVAPPPLPGANNSGSETPPPLPPKSPSFQTQKALPTPPGAPGPQAILQKKRRGPGTSGGKLNPPPAPPARSPTTELSSKSQQPGGQLRNGGQHAIDDFESKFTFHSMEDFPPPDEYKPCQKIYPSKVPRSRTPGSWLQAEAAGQSSDDIKSRNSQLSLKALPVR.

Pro residues predominate over residues 1-41 (MPVPPPPPPPPPPPPPPPPPLGAPPPPPLGAPPPPPPPGPP). Positions 1 to 485 (MPVPPPPPPP…QLSLKALPVR (485 aa)) are disordered. 3 short sequence motifs (profilin-binding motif) span residues 3-8 (VPPPPP), 11-16 (PPPPPP), and 31-36 (APPPPP). The WH2 domain occupies 56 to 73 (GRSALLADIQQGTRLRKV). Asymmetric dimethylarginine is present on Arg57. The short motif at 69–72 (RLRK) is the RLRK element. Ser161 carries the post-translational modification Phosphoserine. Positions 176–203 (PVPPRPSVPAPPPPTPPPPPPPPLPPAS) are enriched in pro residues. Ser211 bears the Phosphoserine mark. A compositionally biased stretch (pro residues) spans 212-246 (PPAPPTKVNPSVVPPPLPCAPPLPPPPPTPPPLPP). Low complexity predominate over residues 247–262 (ASALSDKAVRPQLAPL). 2 stretches are compositionally biased toward pro residues: residues 263 to 278 (HLPP…PPCG) and 296 to 312 (PPAP…PPLP). Position 392 is a phosphoserine (Ser392). Positions 392-405 (SPTTELSSKSQQPG) are enriched in polar residues. The span at 415-439 (AIDDFESKFTFHSMEDFPPPDEYKP) shows a compositional bias: basic and acidic residues. The WASP-binding motif motif lies at 424-448 (TFHSMEDFPPPDEYKPCQKIYPSKV).

As to quaternary structure, interacts with WASL, and monomeric and filamentous actin. As to expression, isoform 1 is expressed in brain and testis and isoform 2 is expressed only in brain (at protein level).

Its subcellular location is the cytoplasm. In terms of biological role, may be a regulator of cytoskeletal organization (Potential). May have a role in spermatogenesis. In Mus musculus (Mouse), this protein is WAS/WASL-interacting protein family member 3 (Wipf3).